Consider the following 382-residue polypeptide: MAVLGSWTAQRCLWENGGRSLLRAVAQSGPCCSHQAKRYLLTDDILKLHEFQKKKLATLYQIYGKKDLYFQMIEDKLQRNGIILRDELKTLLHLCSTQPDVEFAKRVIYRYHAENKNVMFGEFRFGPVFLRLCYELDLEDIALDLLKDQTLRGFFSDCTSFNILMDMLFTKGQYERAVEVLVEMRNQRVRFSKDTYILAFAVCYKLNNPNSCKICTTLLEEIEMTGDLLPKQAACFAAAFALKQNEFQRARTIYSKIMNTDTKLCNNLLLLIKVHTSTMEDVLHFLEAATGTTGSILVKKLEFSEEVLASAGQKLKSQAELHTRFNSVYQRLKNEGQISALTLDQMLCYTSPELRHTNAHLLRNRKISHRTFRSLQSTLLVE.

One copy of the PPR repeat lies at 159–193 (TSFNILMDMLFTKGQYERAVEVLVEMRNQRVRFSK).

Belongs to the PTCD2 family.

Its subcellular location is the mitochondrion. In terms of biological role, may be involved in mitochondrial RNA maturation and mitochondrial respiratory chain function. The protein is Pentatricopeptide repeat-containing protein 2, mitochondrial (ptcd2) of Xenopus laevis (African clawed frog).